The chain runs to 384 residues: Lipid-A-disaccharide synthase (384 aa).

It belongs to the LpxB family.

It catalyses the reaction a lipid X + a UDP-2-N,3-O-bis[(3R)-3-hydroxyacyl]-alpha-D-glucosamine = a lipid A disaccharide + UDP + H(+). Its pathway is bacterial outer membrane biogenesis; LPS lipid A biosynthesis. Functionally, condensation of UDP-2,3-diacylglucosamine and 2,3-diacylglucosamine-1-phosphate to form lipid A disaccharide, a precursor of lipid A, a phosphorylated glycolipid that anchors the lipopolysaccharide to the outer membrane of the cell. The chain is Lipid-A-disaccharide synthase from Geobacter metallireducens (strain ATCC 53774 / DSM 7210 / GS-15).